Reading from the N-terminus, the 175-residue chain is Putative lipoprotein LppN (175 aa).

An N-terminal signal peptide occupies residues 1-20; it reads MRLPGRHVLYALSAVTMLAA. Cys-21 is lipidated: N-palmitoyl cysteine. A lipid anchor (S-diacylglycerol cysteine) is attached at Cys-21. A disordered region spans residues 31-56; sequence ASTNMNPTNPPATAETATVSPTPAPQ. Low complexity predominate over residues 33-48; that stretch reads TNMNPTNPPATAETAT.

It localises to the cell membrane. The polypeptide is Putative lipoprotein LppN (lppN) (Mycobacterium bovis (strain ATCC BAA-935 / AF2122/97)).